The primary structure comprises 83 residues: Hainantoxin-III 9 (83 aa).

An N-terminal signal peptide occupies residues 1–21 (MKASMFLALAGLALLFVVCYA). Positions 22-48 (SESEEKEFPIELLSKIFAVDVFKGEER) are excised as a propeptide. 3 disulfide bridges follow: C50-C65, C57-C70, and C64-C77. L81 is subject to Leucine amide.

It belongs to the neurotoxin 10 (Hwtx-1) family. 15 (Hntx-3) subfamily. Monomer. Expressed by the venom gland.

It localises to the secreted. In terms of biological role, selective antagonist of neuronal tetrodotoxin (TTX)-sensitive voltage-gated sodium channels (IC(50)=1270 nM on Nav1.1/SCN1A, 270 nM on Nav1.2/SCN2A, 491 nM on Nav1.3/SCN3A and 232 nM on Nav1.7/SCN9A). This toxin suppress Nav1.7 current amplitude without significantly altering the activation, inactivation, and repriming kinetics. Short extreme depolarizations partially activate the toxin-bound channel, indicating voltage-dependent inhibition of this toxin. This toxin increases the deactivation of the Nav1.7 current after extreme depolarizations. The toxin-Nav1.7 complex is gradually dissociated upon prolonged strong depolarizations in a voltage-dependent manner, and the unbound toxin rebinds to Nav1.7 after a long repolarization. Moreover, analysis of chimeric channels showed that the DIIS3-S4 linker is critical for toxin binding to Nav1.7. These data are consistent with this toxin interacting with Nav1.7 site 4 and trapping the domain II voltage sensor in the closed state. This chain is Hainantoxin-III 9, found in Cyriopagopus hainanus (Chinese bird spider).